Consider the following 275-residue polypeptide: Phenylalanine-4-hydroxylase (275 aa).

Residues His135, His140, and Glu181 each coordinate Fe cation.

Belongs to the biopterin-dependent aromatic amino acid hydroxylase family. Fe(2+) is required as a cofactor.

It catalyses the reaction (6R)-L-erythro-5,6,7,8-tetrahydrobiopterin + L-phenylalanine + O2 = (4aS,6R)-4a-hydroxy-L-erythro-5,6,7,8-tetrahydrobiopterin + L-tyrosine. It functions in the pathway amino-acid degradation; L-phenylalanine degradation; acetoacetate and fumarate from L-phenylalanine: step 1/6. This Mesorhizobium japonicum (strain LMG 29417 / CECT 9101 / MAFF 303099) (Mesorhizobium loti (strain MAFF 303099)) protein is Phenylalanine-4-hydroxylase (phhA).